Consider the following 564-residue polypeptide: MKVSQFFLATVKETPADAVLASHQLMIRAGMLRKLASGLYTWLPLGLRVLQKVADVVREEMNRAGALELLMPIVQPASLWQESGRWEAYGAELLRIMDRHQNGFCFGPTHEEVITDIARQELKSYKQLPLNFYQIQTKFRDEIRPRFGVMRSREFLMKDAYSFDLDEKGMQAAYEKMFDAYRRIFTRLGLNFRAVLADTGAIGGDYSHEFQVLADVGEDTVVYSDESDYAANIEKAAAQAPQGERVKPVAEIKKIATPGVRTIKQLADKANILPEKGVKTLIVKGDESSLIALILRGDHELNDVKAQHLPGVAFPLQFADEKEIREAIGCGPGSLGPVNLPIPFIVDRDAAQLVDFSCGANEDDFHWINVNWERDVPLGSVADIRKVVEGDISPDGKGRLRFARGIEVGQVFQLGDKYSRKMNATVVDELGKSRYLQMGCYGIGVSRTVAAAIEQNHDERGIIWPTPMAPFFIALVPVNMHKSYRVREACEKLYNELIDAGYEVLWDDRKERPGVMFADMDLIGIPHRLVISESGLDRGIVEYKARKSKEAENVSLENVLSVFR.

It belongs to the class-II aminoacyl-tRNA synthetase family. ProS type 1 subfamily. Homodimer.

It is found in the cytoplasm. It catalyses the reaction tRNA(Pro) + L-proline + ATP = L-prolyl-tRNA(Pro) + AMP + diphosphate. Catalyzes the attachment of proline to tRNA(Pro) in a two-step reaction: proline is first activated by ATP to form Pro-AMP and then transferred to the acceptor end of tRNA(Pro). As ProRS can inadvertently accommodate and process non-cognate amino acids such as alanine and cysteine, to avoid such errors it has two additional distinct editing activities against alanine. One activity is designated as 'pretransfer' editing and involves the tRNA(Pro)-independent hydrolysis of activated Ala-AMP. The other activity is designated 'posttransfer' editing and involves deacylation of mischarged Ala-tRNA(Pro). The misacylated Cys-tRNA(Pro) is not edited by ProRS. The protein is Proline--tRNA ligase of Coxiella burnetii (strain Dugway 5J108-111).